Consider the following 349-residue polypeptide: Sensory histidine kinase/phosphatase NtrB (349 aa).

The PAS domain occupies 5–78; that stretch reads TQPDAGQILN…SLEAGQGFTD (74 aa). One can recognise a Histidine kinase domain in the interval 136–349; it reads GLAHEIKNPL…EFSVYLPIRK (214 aa). A Phosphohistidine; by autocatalysis modification is found at histidine 139. Lysine 329 serves as a coordination point for ATP.

In terms of processing, autophosphorylated.

Its subcellular location is the cytoplasm. It carries out the reaction ATP + protein L-histidine = ADP + protein N-phospho-L-histidine.. In terms of biological role, member of the two-component regulatory system NtrB/NtrC, which controls expression of the nitrogen-regulated (ntr) genes in response to nitrogen limitation. Under conditions of nitrogen limitation, NtrB autophosphorylates and transfers the phosphoryl group to NtrC. In the presence of nitrogen, acts as a phosphatase that dephosphorylates and inactivates NtrC. This chain is Sensory histidine kinase/phosphatase NtrB (glnL), found in Escherichia coli O157:H7.